Reading from the N-terminus, the 360-residue chain is MKPSIVAKLEALHERHEEVQALLGDAGIIADQDRFRALSREYAQLSDVSRCFTDWQQVQDDIETAQMMLDDPEMREMAQEELREAKEKSEQLEQQLQVLLLPKDPDDERNAFLEVRAGTGGDEAALFAGDLFRMYSRYAEARRWRVEIMSMSEGEHGGYKEIIAKISGDGVYGRLKFESGGHRVQRVPATESQGRIHTSACTVAVMPELPEAELPDINPADLRIDTFRSSGAGGQHVNTTDSAIRITHLPTGIVVECQDERSQHKNKAKALSVLGARIHAAETAKRQQAEASTRRNLLGSGDRSDRNRTYNFPQGRVTDHRINLTLYRLDETMEGKLDMLIEPIVQEHQADLLAALSEQE.

Q235 is subject to N5-methylglutamine. The segment at 284–313 (AKRQQAEASTRRNLLGSGDRSDRNRTYNFP) is disordered.

The protein belongs to the prokaryotic/mitochondrial release factor family. Post-translationally, methylated by PrmC. Methylation increases the termination efficiency of RF1.

The protein localises to the cytoplasm. Its function is as follows. Peptide chain release factor 1 directs the termination of translation in response to the peptide chain termination codons UAG and UAA. In Salmonella agona (strain SL483), this protein is Peptide chain release factor 1.